The following is a 401-amino-acid chain: Argininosuccinate synthase (401 aa).

Alanine 8 to serine 16 is a binding site for ATP. Tyrosine 85 is an L-citrulline binding site. Glycine 115 contributes to the ATP binding site. Residues threonine 117, asparagine 121, and aspartate 122 each coordinate L-aspartate. Asparagine 121 is a binding site for L-citrulline. Residues arginine 125, serine 173, glutamate 258, and tyrosine 270 each contribute to the L-citrulline site.

The protein belongs to the argininosuccinate synthase family. Type 1 subfamily. As to quaternary structure, homotetramer.

It localises to the cytoplasm. The catalysed reaction is L-citrulline + L-aspartate + ATP = 2-(N(omega)-L-arginino)succinate + AMP + diphosphate + H(+). The protein operates within amino-acid biosynthesis; L-arginine biosynthesis; L-arginine from L-ornithine and carbamoyl phosphate: step 2/3. The sequence is that of Argininosuccinate synthase from Staphylococcus aureus (strain MSSA476).